Reading from the N-terminus, the 155-residue chain is MSESCPCCSGLQYNACCQPYLTHAATAAEPAILMRSRYTAYVKHDVDYLIATWHPDLHPEKWRESLTESCQNSQWLGLTILATSPGKIPDEGYVEFAARYISEIDSQRTEVMRERSRFLRQHNRWYYIDGVHLQTGRNEPCPCGSGKKYKKCCGQ.

The protein belongs to the UPF0225 family.

This Pectobacterium atrosepticum (strain SCRI 1043 / ATCC BAA-672) (Erwinia carotovora subsp. atroseptica) protein is UPF0225 protein ECA2332.